An 89-amino-acid polypeptide reads, in one-letter code: Small ribosomal subunit protein uS15 (89 aa).

The protein belongs to the universal ribosomal protein uS15 family. In terms of assembly, part of the 30S ribosomal subunit. Forms a bridge to the 50S subunit in the 70S ribosome, contacting the 23S rRNA.

In terms of biological role, one of the primary rRNA binding proteins, it binds directly to 16S rRNA where it helps nucleate assembly of the platform of the 30S subunit by binding and bridging several RNA helices of the 16S rRNA. Functionally, forms an intersubunit bridge (bridge B4) with the 23S rRNA of the 50S subunit in the ribosome. The sequence is that of Small ribosomal subunit protein uS15 from Pseudomonas entomophila (strain L48).